The primary structure comprises 121 residues: Estrogen receptor (121 aa).

Positions 1–121 (LFAPNLLLDR…IRHMSNKGME (121 aa)) constitute an NR LBD domain. The S-palmitoyl cysteine moiety is linked to residue Cys45.

This sequence belongs to the nuclear hormone receptor family. NR3 subfamily. In terms of assembly, binds DNA as a homodimer. Can form a heterodimer with ESR2. Interacts with coactivator NCOA5. Interacts with NCOA7; the interaction is ligand-inducible. Interacts with AKAP13, CUEDC2, HEXIM1, KDM5A, MAP1S, PELP1, SMARD1, and UBE1C. Interacts with MUC1; the interaction is stimulated by 7 beta-estradiol (E2) and enhances ERS1-mediated transcription. Interacts with DNTTIP2, and UIMC1. Interacts with KMT2D/MLL2. Interacts with ATAD2; the interaction is enhanced by estradiol. Interacts with KIF18A and LDB1. Interacts with RLIM (via its C-terminus). Interacts with MACROD1. Interacts with SH2D4A and PLCG. Interacts with SH2D4A; the interaction blocks binding to PLCG and inhibits estrogen-induced cell proliferation. Interacts with DYNLL1. Interacts with CCDC62; the interaction requires estradiol and appears to enhance the transcription of target genes. Interacts with NR2C1; the interaction prevents homodimerization of ESR1 and suppresses its transcriptional activity and cell growth. Interacts with DNAAF4. Interacts with PRMT2. Interacts with PI3KR1 or PIK3R2, SRC and PTK2/FAK1. Interacts with RBFOX2. Interacts with EP300; the interaction is estrogen-dependent and enhanced by CITED1. Interacts with CITED1; the interaction is estrogen-dependent. Interacts with FAM120B, FOXL2, PHB2 and SLC30A9. Interacts with coactivators NCOA3 and NCOA6. Interacts with STK3/MST2 only in the presence of SAV1 and vice-versa. Binds to CSNK1D. Interacts with NCOA2; NCOA2 can interact with ESR1 AF-1 and AF-2 domains simultaneously and mediate their transcriptional synergy. Interacts with DDX5. Interacts with NCOA1; the interaction seems to require a self-association of N-terminal and C-terminal regions. Interacts with ZNF366, DDX17, NFKB1, RELA, SP1 and SP3. Interacts with NRIP1. Interacts with GPER1; the interaction occurs in an estrogen-dependent manner. Interacts with CLOCK and the interaction is stimulated by estrogen. Interacts with TRIP4 (ufmylated); estrogen dependent. Interacts with LMTK3; the interaction phosphorylates ESR1 (in vitro) and protects it against proteasomal degradation. Interacts with CCAR2 (via N-terminus) in a ligand-independent manner. Interacts with ZFHX3. Interacts with SFR1 in a ligand-dependent and -independent manner. Interacts with DCAF13, LATS1 and DCAF1; regulates ESR1 ubiquitination and ubiquitin-mediated proteasomal degradation. Interacts (via DNA-binding domain) with POU4F2 (C-terminus); this interaction increases the estrogen receptor ESR1 transcriptional activity in a DNA- and ligand 17-beta-estradiol-independent manner. Interacts with ESRRB isoform 1. Interacts with UBE3A and WBP2. Interacts with GTF2B. Interacts with RBM39. In the absence of hormonal ligand, interacts with TACC1. Interacts with BAG1; the interaction is promoted in the absence of estradiol (17-beta-estradiol/E2). Interacts with and ubiquitinated by STUB1; the interaction is promoted in the absence of estradiol (17-beta-estradiol/E2). Interacts with NEDD8. Ubiquitinated; regulated by LATS1 via DCAF1 it leads to ESR1 proteasomal degradation. Deubiquitinated by OTUB1. Ubiquitinated by STUB1/CHIP; in the CA1 hippocampal region following loss of endogenous circulating estradiol (17-beta-estradiol/E2). Ubiquitinated by UBR5, leading to its degradation: UBR5 specifically recognizes and binds ligand-bound ESR1 when it is not associated with coactivators (NCOAs). In presence of NCOAs, the UBR5-degron is not accessible, preventing its ubiquitination and degradation. In terms of processing, palmitoylated at Cys-45 by ZDHHC7 and ZDHHC21. Palmitoylation is required for plasma membrane targeting and for rapid intracellular signaling via ERK and AKT kinases and cAMP generation, but not for signaling mediated by the nuclear hormone receptor. Post-translationally, phosphorylated by cyclin A/CDK2 and CK1. Phosphorylation probably enhances transcriptional activity. Dephosphorylation by PPP5C inhibits its transactivation activity. Phosphorylated by LMTK3 (in vitro). Dimethylated by PRMT1. Demethylated by JMJD6.

It is found in the nucleus. It localises to the cytoplasm. The protein resides in the golgi apparatus. Its subcellular location is the cell membrane. Nuclear hormone receptor. The steroid hormones and their receptors are involved in the regulation of eukaryotic gene expression and affect cellular proliferation and differentiation in target tissues. Ligand-dependent nuclear transactivation involves either direct homodimer binding to a palindromic estrogen response element (ERE) sequence or association with other DNA-binding transcription factors, such as AP-1/c-Jun, c-Fos, ATF-2, Sp1 and Sp3, to mediate ERE-independent signaling. Ligand binding induces a conformational change allowing subsequent or combinatorial association with multiprotein coactivator complexes through LXXLL motifs of their respective components. Mutual transrepression occurs between the estrogen receptor (ER) and NF-kappa-B in a cell-type specific manner. Decreases NF-kappa-B DNA-binding activity and inhibits NF-kappa-B-mediated transcription from the IL6 promoter and displace RELA/p65 and associated coregulators from the promoter. Recruited to the NF-kappa-B response element of the CCL2 and IL8 promoters and can displace CREBBP. Present with NF-kappa-B components RELA/p65 and NFKB1/p50 on ERE sequences. Can also act synergistically with NF-kappa-B to activate transcription involving respective recruitment adjacent response elements; the function involves CREBBP. Can activate the transcriptional activity of TFF1. Also mediates membrane-initiated estrogen signaling involving various kinase cascades. Essential for MTA1-mediated transcriptional regulation of BRCA1 and BCAS3. Maintains neuronal survival in response to ischemic reperfusion injury when in the presence of circulating estradiol (17-beta-estradiol/E2). The sequence is that of Estrogen receptor (ESR1) from Macaca mulatta (Rhesus macaque).